We begin with the raw amino-acid sequence, 252 residues long: U2 small nuclear ribonucleoprotein A' (252 aa).

LRR repeat units follow at residues 41 to 62 (PHDA…PLSP), 63 to 84 (RIRT…LPNA), and 87 to 108 (NLKN…EVLG). Residues 121–159 (NPVTKKENYRYWVLWLCPQVRFLDYVKVKDAERQKAKEL) enclose the LRRCT domain.

It belongs to the U2 small nuclear ribonucleoprotein A family. Associated with the spliceosome.

It is found in the nucleus. Functionally, involved in pre-mRNA splicing. The protein is U2 small nuclear ribonucleoprotein A' (lea-1) of Neurospora crassa (strain ATCC 24698 / 74-OR23-1A / CBS 708.71 / DSM 1257 / FGSC 987).